The following is a 222-amino-acid chain: MRLHSVLAVATAVGCAVAHDPVVQVPMCPWNAVINFDKTVPDQKPFPQTTIRLCYNSKTLSLKFEAKDEKYFYFDPSQKINDDIWKYEVMEAFISTGHADPSTYLEFEVSPNNVTYQAFVYNPSKNRTDGAPFDHAFISNPIADGITSKTSLAQTQGKWTSNVQIPLALFNVDTPQGSKWRMNFFRTVTSKETYPDQILGAWNSPDKASFHITSFFRKIVFV.

The N-terminal stretch at 1–18 (MRLHSVLAVATAVGCAVA) is a signal peptide. N-linked (GlcNAc...) asparagine glycans are attached at residues N113 and N126.

It is found in the secreted. The sequence is that of Extracellular protein ARB_03106 from Arthroderma benhamiae (strain ATCC MYA-4681 / CBS 112371) (Trichophyton mentagrophytes).